Here is a 397-residue protein sequence, read N- to C-terminus: Subtilisin-like protease 3 (397 aa).

An N-terminal signal peptide occupies residues M1–A19. A propeptide spanning residues R20–A116 is cleaved from the precursor. In terms of domain architecture, Inhibitor I9 spans S35–A116. Residues T126–R397 form the Peptidase S8 domain. Catalysis depends on charge relay system residues D158 and H189. N250 carries an N-linked (GlcNAc...) asparagine glycan. S344 serves as the catalytic Charge relay system. N393 carries N-linked (GlcNAc...) asparagine glycosylation.

Belongs to the peptidase S8 family.

It localises to the secreted. In terms of biological role, secreted subtilisin-like serine protease with keratinolytic activity that contributes to pathogenicity. In Arthroderma otae (strain ATCC MYA-4605 / CBS 113480) (Microsporum canis), this protein is Subtilisin-like protease 3 (SUB3).